The following is a 459-amino-acid chain: Proton-coupled folate transporter (459 aa).

N-acetylmethionine is present on Met-1. The Cytoplasmic segment spans residues Met-1 to Val-25. Ser-6 is modified (phosphoserine). Residues Glu-26–Thr-44 form a helical membrane-spanning segment. Over Gln-45–Thr-82 the chain is Extracellular. N-linked (GlcNAc...) asparagine glycans are attached at residues Asn-58 and Asn-68. Residues Cys-66 and Cys-298 are joined by a disulfide bond. A helical membrane pass occupies residues Ser-83–Ser-108. Topologically, residues Asp-109–Gly-112 are cytoplasmic. Residues Arg-113 to Val-135 traverse the membrane as a helical segment. At Gln-136–His-140 the chain is on the extracellular side. Residues Ile-141–Leu-154 form a helical membrane-spanning segment. The Cytoplasmic portion of the chain corresponds to Gly-155–Arg-177. 2 residues coordinate H(+): Asp-156 and Glu-185. Residues Thr-178 to Leu-203 traverse the membrane as a helical segment. Over Arg-204–Tyr-208 the chain is Extracellular. The helical transmembrane segment at Ala-209–Ala-227 threads the bilayer. Topologically, residues Phe-228 to His-266 are cytoplasmic. A helical transmembrane segment spans residues Leu-267–Thr-289. His-281 contacts H(+). Residues Leu-290–Lys-302 are Extracellular-facing. The chain crosses the membrane as a helical span at residues Leu-303–Leu-325. Residues Gln-326–Asp-331 are Cytoplasmic-facing. The chain crosses the membrane as a helical span at residues Thr-332 to Phe-351. Topologically, residues Ala-352–Thr-355 are extracellular. Residues Pro-356–Arg-376 form a helical membrane-spanning segment. Residues Ala-377–Gln-388 are Cytoplasmic-facing. The chain crosses the membrane as a helical span at residues Gly-389 to Tyr-414. Residues Pro-415–Lys-422 are Extracellular-facing. The chain crosses the membrane as a helical span at residues Gly-423 to Gly-441. Topologically, residues Val-442–Ser-459 are cytoplasmic.

Belongs to the major facilitator superfamily. SLC46A family. As to quaternary structure, monomer. Expressed almost exclusively in the small intestine: expressed at high level in the upper half of the small intestine (duodenum and jejunum), expression decreases downwardly in the subsequent quarter and is undetectable in the last quarter (the lowest ileum). Expressed at low level in other tissues, including liver.

It localises to the cell membrane. It is found in the apical cell membrane. The protein resides in the basolateral cell membrane. The protein localises to the endosome membrane. Its subcellular location is the cytoplasm. The enzyme catalyses folate(in) + H(+)(in) = folate(out) + H(+)(out). It catalyses the reaction (6S)-5-methyl-5,6,7,8-tetrahydrofolate(in) + H(+)(in) = (6S)-5-methyl-5,6,7,8-tetrahydrofolate(out) + H(+)(out). It carries out the reaction methotrexate(in) + H(+)(in) = methotrexate(out) + H(+)(out). The catalysed reaction is pemetrexed(in) + H(+)(in) = pemetrexed(out) + H(+)(out). In contrast to human ortholog, not inhibited by myricetin. Functionally, proton-coupled folate symporter that mediates folate absorption using an H(+) gradient as a driving force. Involved in the intestinal absorption of folates at the brush-border membrane of the proximal jejunum, and the transport from blood to cerebrospinal fluid across the choroid plexus. Functions at acidic pH via alternate outward- and inward-open conformation states. Protonation of residues in the outward open state primes the protein for transport. Binding of folate promotes breaking of salt bridge network and subsequent closure of the extracellular gate, leading to the inward-open state and release of protons and folate. Also able to transport antifolate drugs, such as methotrexate and pemetrexed. Involved in FOLR1-mediated endocytosis by serving as a route of export of folates from acidified endosomes. Also acts as a lower-affinity, pH-independent heme carrier protein and constitutes the main importer of heme in the intestine. Imports heme in the retina and retinal pigment epithelium, in neurons of the hippocampus, in hepatocytes and in the renal epithelial cells. Hence, participates in the trafficking of heme and increases intracellular iron content. The chain is Proton-coupled folate transporter from Rattus norvegicus (Rat).